The primary structure comprises 634 residues: DNA gyrase subunit B (634 aa).

The 115-residue stretch at 416-530 (REIYIVEGDS…NGYIYIAMPP (115 aa)) folds into the Toprim domain. Mg(2+)-binding residues include E422, D495, and D497.

The protein belongs to the type II topoisomerase GyrB family. In terms of assembly, heterotetramer, composed of two GyrA and two GyrB chains. In the heterotetramer, GyrA contains the active site tyrosine that forms a transient covalent intermediate with DNA, while GyrB binds cofactors and catalyzes ATP hydrolysis. Mg(2+) is required as a cofactor. Mn(2+) serves as cofactor. The cofactor is Ca(2+).

It is found in the cytoplasm. The enzyme catalyses ATP-dependent breakage, passage and rejoining of double-stranded DNA.. Functionally, a type II topoisomerase that negatively supercoils closed circular double-stranded (ds) DNA in an ATP-dependent manner to modulate DNA topology and maintain chromosomes in an underwound state. Negative supercoiling favors strand separation, and DNA replication, transcription, recombination and repair, all of which involve strand separation. Also able to catalyze the interconversion of other topological isomers of dsDNA rings, including catenanes and knotted rings. Type II topoisomerases break and join 2 DNA strands simultaneously in an ATP-dependent manner. The sequence is that of DNA gyrase subunit B from Borreliella burgdorferi (strain ATCC 35210 / DSM 4680 / CIP 102532 / B31) (Borrelia burgdorferi).